Consider the following 1220-residue polypeptide: von Willebrand factor A domain-containing protein 5B1 (1220 aa).

A signal peptide spans 1–18; the sequence is MPGLLNWITGAALPLTAS. Residues 19 to 149 enclose the VIT domain; the sequence is DVTSCVSGYA…NVTIFISTSS (131 aa). Asn140 is a glycosylation site (N-linked (GlcNAc...) asparagine). Residues 361–529 enclose the VWFA domain; the sequence is EFIFLIDRSS…RLQPKMVKSL (169 aa). Asn650 carries an N-linked (GlcNAc...) asparagine glycan. The tract at residues 715 to 807 is disordered; sequence NSGQDLNQGP…SPSRPATPAP (93 aa). Positions 757–774 are enriched in basic and acidic residues; sequence VRERTSDSRSPGDLEPSH. A compositionally biased stretch (low complexity) spans 796 to 807; it reads RASPSRPATPAP. The residue at position 881 (Tyr881) is a Phosphotyrosine. Disordered regions lie at residues 937–962 and 976–995; these read RGTS…GKFQ and EARS…QRSL. Asn1017 carries an N-linked (GlcNAc...) asparagine glycan. Polar residues predominate over residues 1093 to 1111; the sequence is TTRPSESKTPSPQLCTSSP. Residues 1093-1115 are disordered; that stretch reads TTRPSESKTPSPQLCTSSPPRHP.

It localises to the secreted. This Homo sapiens (Human) protein is von Willebrand factor A domain-containing protein 5B1 (VWA5B1).